Here is a 384-residue protein sequence, read N- to C-terminus: METRDVLIVGGGVIGCATAYELSQYKLKVTLVEKHHYLAQETSHANSGVIHTGIDPNPHKLTAKYNILGKKLWLNTYFKRLGFPRQKIRTLIVAFNEMEREQLEVLKQRGIANQINLEDIQMLSKEETLKLEPYVNPEIVAGLKIEGSWAIDPVLASKCLALAAQQNKVQICTNTEVTNISKQVDGTYLVWTNNETTPSFKVKKIIDAAGHYADYLAHLAKADDFEQTTRRGQYVVVTNQGELHLNSMVFMVPTIHGKGVIVSPMLDGNFLVGPTALDGVDKEATRYITKDAPCMLTKIGKHMVPSLNINNALISFAGSRPIDKATNDFIIRVAHNDPDFVILGGMKSPGLTAAPAIVREAVRLLNWKLTKKPNWNGKYNLPWI.

A signal peptide spans 1–15 (METRDVLIVGGGVIG). Ile-14 is a binding site for FAD. Residue Cys-16 is the site of N-palmitoyl cysteine attachment. Residue Cys-16 is the site of S-diacylglycerol cysteine attachment. FAD is bound by residues Glu-33, 42–43 (TS), and 47–49 (SGV). Sn-glycerol 3-phosphate-binding residues include Ser-47 and His-51. The active-site Proton acceptor is the His-51. Val-177 contributes to the FAD binding site. Positions 258 and 320 each coordinate sn-glycerol 3-phosphate. 346–347 (MK) provides a ligand contact to FAD. Ser-348 serves as a coordination point for sn-glycerol 3-phosphate. Thr-352 is an FAD binding site.

Monomer. Requires FAD as cofactor.

Its subcellular location is the cytoplasm. It localises to the cell membrane. The catalysed reaction is sn-glycerol 3-phosphate + O2 = dihydroxyacetone phosphate + H2O2. It participates in polyol metabolism; glycerol degradation via glycerol kinase pathway; glycerone phosphate from sn-glycerol 3-phosphate (aerobic route): step 1/1. Its function is as follows. Catalyzes the oxidation of glycerol 3-phosphate to dihydroxyacetone phosphate (DHAP), with a reduction of O2 to H2O2. The formation of hydrogen peroxide by this enzyme is crucial for cytotoxic effects of M.pneumoniae on host cells. Is involved in the metabolism of glycerol and is essential for glycerol utilization; glycerol is one of the few carbon sources that can be utilized by M.pneumoniae for growth. To a lesser extent, is also able to use glyceraldehyde 3-phosphate (GAP), an intermediate in the glycolysis pathway, as a substrate (but the structure of the product has not been elucidated). Therefore, in the absence of glycerol, GAP may serve as a substrate in the GlpO reaction to supply H2O2 during mycoplasma infection. Does not show any dehydrogenase activity with NAD(+). The polypeptide is Glycerol 3-phosphate oxidase (Mycoplasma pneumoniae (strain ATCC 29342 / M129 / Subtype 1) (Mycoplasmoides pneumoniae)).